The sequence spans 588 residues: Lysine--tRNA ligase (588 aa).

Residues 1–10 (MDSSVSTEPL) show a composition bias toward polar residues. The segment at 1–54 (MDSSVSTEPLSKNALKREKKAKEKEQLEQEKKAAAVAKRQMEQHNLPENDDLDP) is disordered. A compositionally biased stretch (basic and acidic residues) spans 20 to 47 (KAKEKEQLEQEKKAAAVAKRQMEQHNLP).

This sequence belongs to the class-II aminoacyl-tRNA synthetase family.

It is found in the cytoplasm. The enzyme catalyses tRNA(Lys) + L-lysine + ATP = L-lysyl-tRNA(Lys) + AMP + diphosphate. In Solanum lycopersicum (Tomato), this protein is Lysine--tRNA ligase (LYSRS).